The sequence spans 289 residues: 4-diphosphocytidyl-2-C-methyl-D-erythritol kinase (289 aa).

Lys13 is an active-site residue. Residue 101-111 (PMGGGLGGGSS) coordinates ATP. Asp143 is an active-site residue.

The protein belongs to the GHMP kinase family. IspE subfamily.

It carries out the reaction 4-CDP-2-C-methyl-D-erythritol + ATP = 4-CDP-2-C-methyl-D-erythritol 2-phosphate + ADP + H(+). It participates in isoprenoid biosynthesis; isopentenyl diphosphate biosynthesis via DXP pathway; isopentenyl diphosphate from 1-deoxy-D-xylulose 5-phosphate: step 3/6. In terms of biological role, catalyzes the phosphorylation of the position 2 hydroxy group of 4-diphosphocytidyl-2C-methyl-D-erythritol. This is 4-diphosphocytidyl-2-C-methyl-D-erythritol kinase from Janthinobacterium sp. (strain Marseille) (Minibacterium massiliensis).